A 201-amino-acid polypeptide reads, in one-letter code: LexA repressor (201 aa).

Positions 28–48 (LREIAAKLGISGTLGVMKHLE) form a DNA-binding region, H-T-H motif. Active-site for autocatalytic cleavage activity residues include Ser-120 and Lys-157.

The protein belongs to the peptidase S24 family. Homodimer.

The enzyme catalyses Hydrolysis of Ala-|-Gly bond in repressor LexA.. In terms of biological role, represses a number of genes involved in the response to DNA damage (SOS response), including recA and lexA. In the presence of single-stranded DNA, RecA interacts with LexA causing an autocatalytic cleavage which disrupts the DNA-binding part of LexA, leading to derepression of the SOS regulon and eventually DNA repair. This chain is LexA repressor, found in Geobacter sp. (strain M21).